The following is a 334-amino-acid chain: Peroxidase 65 (334 aa).

The signal sequence occupies residues 1–28 (MSNMQFSRGFNPFVILFCLAVVAPIISA). 4 disulfide bridges follow: Cys-42-Cys-123, Cys-75-Cys-80, Cys-129-Cys-326, and Cys-208-Cys-236. His-73 (proton acceptor) is an active-site residue. Ca(2+) is bound by residues Asp-74, Gly-79, Asp-81, and Ser-83. Substrate is bound at residue Pro-171. Residue Asn-174 is glycosylated (N-linked (GlcNAc...) asparagine). Position 201 (His-201) interacts with heme b. Thr-202 provides a ligand contact to Ca(2+). Asn-238 is a glycosylation site (N-linked (GlcNAc...) asparagine). The Ca(2+) site is built by Asp-250, Thr-253, and Asp-258. 2 N-linked (GlcNAc...) asparagine glycosylation sites follow: Asn-282 and Asn-294.

Belongs to the peroxidase family. Classical plant (class III) peroxidase subfamily. Heme b serves as cofactor. Ca(2+) is required as a cofactor.

It is found in the secreted. The enzyme catalyses 2 a phenolic donor + H2O2 = 2 a phenolic radical donor + 2 H2O. Its function is as follows. Removal of H(2)O(2), oxidation of toxic reductants, biosynthesis and degradation of lignin, suberization, auxin catabolism, response to environmental stresses such as wounding, pathogen attack and oxidative stress. These functions might be dependent on each isozyme/isoform in each plant tissue. This chain is Peroxidase 65 (PER65), found in Arabidopsis thaliana (Mouse-ear cress).